We begin with the raw amino-acid sequence, 694 residues long: Nuclear cap-binding protein subunit 3 (694 aa).

The segment at 1–47 is disordered; the sequence is MAAVRSLRVSVKSDSASDRSESDSESDSDRDAREAEPMEVEEGEVEL. Positions 15 to 36 are enriched in basic and acidic residues; sequence SASDRSESDSESDSDRDAREAE. Positions 37–47 are enriched in acidic residues; sequence PMEVEEGEVEL. An RNA recognition motif (RRM) domain region spans residues 126-187; the sequence is EALHMSGVDD…LSRMPDKEEV (62 aa). A WLDD motif; essential for 7-methylguanosine-containing mRNA cap binding motif is present at residues 155–158; that stretch reads WIDD. Disordered regions lie at residues 183–277, 336–430, and 461–694; these read DKEE…VKPF, ILKT…MDYD, and LRNS…DSDS. Positions 189-203 are enriched in polar residues; that stretch reads NTDSSKPSELPVQTQ. Residues 212 to 235 show a composition bias toward acidic residues; that stretch reads DDDDDDDEEEEGEVDDDDDDDEED. Residues 236–264 show a composition bias toward basic and acidic residues; sequence EKARDIEDETEKKPQETRETSLSQAERDS. The span at 368-386 shows a compositional bias: acidic residues; it reads EPIEEEEEEEEDGEEDMDA. The span at 387-404 shows a compositional bias: basic and acidic residues; it reads DDRVVEYKDRGEKERGPR. Positions 477 to 496 are enriched in gly residues; that stretch reads IGGGGGGGSGGAVEGRGEGG. 3 stretches are compositionally biased toward basic and acidic residues: residues 501–517, 563–595, and 605–618; these read TSEKVTDVRQLLEEKRQ, SRREPLSDVRSRLGVAKHDNRSLFSEPPKDKKT, and SHKDSGSGDEDKPS. A compositionally biased stretch (acidic residues) spans 634–646; it reads DSDGVEDEDEEDD. The segment covering 685–694 has biased composition (low complexity); it reads DGSNGSDSDS.

The protein belongs to the NCBP3 family. In terms of assembly, component of an alternative cap-binding complex (CBC) composed of NCBP1/CBP80 and NCBP3.

The protein localises to the nucleus. It is found in the cytoplasm. Its function is as follows. Associates with NCBP1/CBP80 to form an alternative cap-binding complex (CBC) which plays a key role in mRNA export. NCBP3 serves as adapter protein linking the capped RNAs (m7GpppG-capped RNA) to NCBP1/CBP80. Unlike the conventional CBC with NCBP2 which binds both small nuclear RNA (snRNA) and messenger (mRNA) and is involved in their export from the nucleus, the alternative CBC with NCBP3 does not bind snRNA and associates only with mRNA thereby playing a role in only mRNA export. This chain is Nuclear cap-binding protein subunit 3, found in Danio rerio (Zebrafish).